Reading from the N-terminus, the 356-residue chain is Zinc finger CCCH domain-containing protein 49 (356 aa).

C3H1-type zinc fingers lie at residues 120–146 (YSGT…HGVF) and 155–177 (YRTQ…AHSP). A disordered region spans residues 209–235 (ISPVSGSPPMSPRADSESSPMTQSLSR). The segment covering 225 to 235 (ESSPMTQSLSR) has biased composition (polar residues).

In Arabidopsis thaliana (Mouse-ear cress), this protein is Zinc finger CCCH domain-containing protein 49.